The primary structure comprises 153 residues: MDKDRPGLPAPDDNIEEVPSTSGVQERASEGDWENVLIEISDSSSEEEAEDAHLDSSQRGKKRKRVDDDAGGSAPAQHVPPPQLDHPGREAILYRFPLDLRRFIQAIGAAATVSFPMAQVCDVCFCPSHNKVSDLLPLVSAPRHASHRPVFRI.

The interval 1–88 (MDKDRPGLPA…VPPPQLDHPG (88 aa)) is disordered.

This is an uncharacterized protein from Epstein-Barr virus (strain P3HR-1) (HHV-4).